The chain runs to 75 residues: Large ribosomal subunit protein bL28 (75 aa).

Belongs to the bacterial ribosomal protein bL28 family.

The sequence is that of Large ribosomal subunit protein bL28 from Buchnera aphidicola subsp. Acyrthosiphon pisum (strain 5A).